A 239-amino-acid polypeptide reads, in one-letter code: Ribonuclease 3 (239 aa).

Positions 18–141 constitute an RNase III domain; that stretch reads YTTLEKALGY…LMAGVYLEAG (124 aa). E54 contacts Mg(2+). D58 is a catalytic residue. 2 residues coordinate Mg(2+): S127 and E130. E130 is a catalytic residue. The DRBM domain maps to 168–237; sequence DYKTALQELT…AYYALQKLKE (70 aa).

The protein belongs to the ribonuclease III family. Homodimer. Mg(2+) is required as a cofactor.

Its subcellular location is the cytoplasm. It carries out the reaction Endonucleolytic cleavage to 5'-phosphomonoester.. Functionally, digests double-stranded RNA. Involved in the processing of primary rRNA transcript to yield the immediate precursors to the large and small rRNAs (23S and 16S). Processes some mRNAs, and tRNAs when they are encoded in the rRNA operon. Processes pre-crRNA and tracrRNA of type II CRISPR loci if present in the organism. This chain is Ribonuclease 3, found in Helicobacter pylori (strain G27).